The sequence spans 284 residues: NADH-cytochrome b5 reductase 1 (284 aa).

Residues 8 to 28 (PFIIFATVAAIISSAVAYYFF) form a helical membrane-spanning segment. An FAD-binding FR-type domain is found at 41–144 (NDFQKFPLIE…RGPKGFFTYT (104 aa)). FAD is bound by residues 124–139 (ESKK…GPKG) and 150–182 (SFGM…KVSL).

This sequence belongs to the flavoprotein pyridine nucleotide cytochrome reductase family. Monomer. Component of the 2-(3-amino-3-carboxypropyl)histidine synthase complex composed of DPH1, DPH2, DPH3 and a NADH-dependent reductase, predominantly CBR1. The cofactor is FAD.

It is found in the mitochondrion outer membrane. It carries out the reaction 2 Fe(III)-[cytochrome b5] + NADH = 2 Fe(II)-[cytochrome b5] + NAD(+) + H(+). The catalysed reaction is 2 Fe(3+)-[Dph3] + NADH = 2 Fe(2+)-[Dph3] + NAD(+) + H(+). It participates in protein modification; peptidyl-diphthamide biosynthesis. Functionally, NADH-dependent reductase for DPH3 and cytochrome b5. Required for the first step of diphthamide biosynthesis, a post-translational modification of histidine which occurs in elongation factor 2. DPH1 and DPH2 transfer a 3-amino-3-carboxypropyl (ACP) group from S-adenosyl-L-methionine (SAM) to a histidine residue, the reaction is assisted by a reduction system comprising DPH3 and a NADH-dependent reductase, predominantly CBR1. By reducing DPH3, also involved in the formation of the tRNA wobble base modification mcm5s 2U (5-methoxycarbonylmethyl-2-thiouridine), mediated by the elongator complex. The cytochrome b5/NADH cytochrome b5 reductase electron transfer system supports the catalytic activity of several sterol biosynthetic enzymes. The polypeptide is NADH-cytochrome b5 reductase 1 (CBR1) (Debaryomyces hansenii (strain ATCC 36239 / CBS 767 / BCRC 21394 / JCM 1990 / NBRC 0083 / IGC 2968) (Yeast)).